A 309-amino-acid chain; its full sequence is MPKVRTKDLIEQFQLELISGEEGIHRPIDTSDLSRPGIEMAGFFTYYPADRVQLLGKTELTFFDTLTTEQKQERMKALCTEETPCIIITRNQDVPDELLQASRESGMPLLRSSQTTTRLSSRLTNYLEGKLAPTTAVHGVLVDIYGVGVLITGQSGVGKSETALELVKRGHRLVADDSVEIRQEDEDTLVGSSPDLIEHLLEIRGLGIINVMTLFGAGAVRNYKRITLVINLEIWDQKKNYDRLGLDEEKMKIIDTELTKITLPVRPGRNLAVIIEVAAMNFRLKRMGVNAAQQFSERLMSAIELGNQE.

Residues H138 and K159 contribute to the active site. ATP is bound at residue 153 to 160 (GQSGVGKS). S160 provides a ligand contact to Mg(2+). Residue D177 is the Proton acceptor; for phosphorylation activity. Proton donor; for dephosphorylation activity of the active site. Residues 201 to 210 (LEIRGLGIIN) form an important for the catalytic mechanism of both phosphorylation and dephosphorylation region. E202 is a binding site for Mg(2+). R243 is a catalytic residue. The tract at residues 264–269 (PVRPGR) is important for the catalytic mechanism of dephosphorylation.

This sequence belongs to the HPrK/P family. Homohexamer. The cofactor is Mg(2+).

The enzyme catalyses [HPr protein]-L-serine + ATP = [HPr protein]-O-phospho-L-serine + ADP + H(+). It carries out the reaction [HPr protein]-O-phospho-L-serine + phosphate + H(+) = [HPr protein]-L-serine + diphosphate. In terms of biological role, catalyzes the ATP- as well as the pyrophosphate-dependent phosphorylation of a specific serine residue in HPr, a phosphocarrier protein of the phosphoenolpyruvate-dependent sugar phosphotransferase system (PTS). HprK/P also catalyzes the pyrophosphate-producing, inorganic phosphate-dependent dephosphorylation (phosphorolysis) of seryl-phosphorylated HPr (P-Ser-HPr). The two antagonistic activities of HprK/P are regulated by several intracellular metabolites, which change their concentration in response to the absence or presence of rapidly metabolisable carbon sources (glucose, fructose, etc.) in the growth medium. Also phosphorylates/dephosphorylates the HPr-like catabolite repression protein crh on a specific serine residue. Therefore, by controlling the phosphorylation state of HPr and crh, HPrK/P is a sensor enzyme that plays a major role in the regulation of carbon metabolism and sugar transport: it mediates carbon catabolite repression (CCR), and regulates PTS-catalyzed carbohydrate uptake and inducer exclusion. The protein is HPr kinase/phosphorylase of Bacillus cereus (strain G9842).